The following is a 301-amino-acid chain: tRNA U34 carboxymethyltransferase (301 aa).

Carboxy-S-adenosyl-L-methionine contacts are provided by residues lysine 70, tryptophan 84, lysine 89, glycine 108, 130–132 (DPS), 157–158 (VE), tyrosine 177, and arginine 292.

The protein belongs to the class I-like SAM-binding methyltransferase superfamily. CmoB family. Homotetramer.

It carries out the reaction carboxy-S-adenosyl-L-methionine + 5-hydroxyuridine(34) in tRNA = 5-carboxymethoxyuridine(34) in tRNA + S-adenosyl-L-homocysteine + H(+). Its function is as follows. Catalyzes carboxymethyl transfer from carboxy-S-adenosyl-L-methionine (Cx-SAM) to 5-hydroxyuridine (ho5U) to form 5-carboxymethoxyuridine (cmo5U) at position 34 in tRNAs. The protein is tRNA U34 carboxymethyltransferase of Sulfurovum sp. (strain NBC37-1).